Consider the following 305-residue polypeptide: Acetyl-coenzyme A carboxylase carboxyl transferase subunit beta (305 aa).

A CoA carboxyltransferase N-terminal domain is found at 23–292; the sequence is GWLKCTHCNE…EENEPSPPPK (270 aa). 4 residues coordinate Zn(2+): C27, C30, C46, and C49. Residues 27–49 form a C4-type zinc finger; it reads CTHCNELIHANELEQNSNCCPKC. The segment at 281–305 is disordered; sequence FSEENEPSPPPKNLIKKTSPLKDKN.

This sequence belongs to the AccD/PCCB family. As to quaternary structure, acetyl-CoA carboxylase is a heterohexamer composed of biotin carboxyl carrier protein (AccB), biotin carboxylase (AccC) and two subunits each of ACCase subunit alpha (AccA) and ACCase subunit beta (AccD). The cofactor is Zn(2+).

The protein localises to the cytoplasm. It carries out the reaction N(6)-carboxybiotinyl-L-lysyl-[protein] + acetyl-CoA = N(6)-biotinyl-L-lysyl-[protein] + malonyl-CoA. The protein operates within lipid metabolism; malonyl-CoA biosynthesis; malonyl-CoA from acetyl-CoA: step 1/1. Functionally, component of the acetyl coenzyme A carboxylase (ACC) complex. Biotin carboxylase (BC) catalyzes the carboxylation of biotin on its carrier protein (BCCP) and then the CO(2) group is transferred by the transcarboxylase to acetyl-CoA to form malonyl-CoA. In Protochlamydia amoebophila (strain UWE25), this protein is Acetyl-coenzyme A carboxylase carboxyl transferase subunit beta.